A 66-amino-acid polypeptide reads, in one-letter code: Large ribosomal subunit protein uL29 (66 aa).

The protein belongs to the universal ribosomal protein uL29 family.

This Chelativorans sp. (strain BNC1) protein is Large ribosomal subunit protein uL29.